The chain runs to 162 residues: uncharacterized protein (162 aa).

The N-terminal stretch at 1-18 (MRKTFLTLLCVSSAIAHA) is a signal peptide.

The protein belongs to the fimbrial protein family.

Functionally, part of the yfcOPQRSUV fimbrial operon. Could contribute to adhesion to various surfaces in specific environmental niches. Increases adhesion to eukaryotic T24 bladder epithelial cells in the absence of fim genes. This is an uncharacterized protein from Escherichia coli (strain K12).